Reading from the N-terminus, the 631-residue chain is Glycosyltransferase-like protein LARGE (631 aa).

The Cytoplasmic portion of the chain corresponds to 1–6; the sequence is MQSNYS. A helical; Signal-anchor for type II membrane protein membrane pass occupies residues 7-27; that stretch reads ISYFLLILFTGTSSYFTIWNF. The Lumenal portion of the chain corresponds to 28–631; the sequence is VDHTRVGAFP…TASRLGIKLR (604 aa). Residues Asn95, Asn105, Asn167, Asn177, Asn287, Asn400, Asn485, Asn502, Asn521, Asn529, and Asn593 are each glycosylated (N-linked (GlcNAc...) asparagine).

The protein belongs to the glycosyltransferase 8 family.

It localises to the golgi apparatus membrane. Probable glycosyltransferase. In Caenorhabditis elegans, this protein is Glycosyltransferase-like protein LARGE (lge-1).